A 258-amino-acid polypeptide reads, in one-letter code: UPF0246 protein Sden_2729 (258 aa).

The protein belongs to the UPF0246 family.

This chain is UPF0246 protein Sden_2729, found in Shewanella denitrificans (strain OS217 / ATCC BAA-1090 / DSM 15013).